The following is a 512-amino-acid chain: Cytochrome P450 1A1 (512 aa).

The segment at 29–40 (SRPRVPKGLKNP) is mitochondrial targeting signal. O-linked (GlcNAc) serine glycosylation is present at Ser67. Position 224 (Phe224) interacts with substrate. A heme-binding site is contributed by Cys457.

The protein belongs to the cytochrome P450 family. As to quaternary structure, interacts with cytosolic chaperones HSP70 and HSP90; this interaction is required for initial targeting to mitochondria. Interacts (via mitochondrial targeting signal) with TOMM40 (via N-terminus); this interaction is required for translocation across the mitochondrial outer membrane. Heme is required as a cofactor.

It localises to the endoplasmic reticulum membrane. It is found in the mitochondrion inner membrane. The protein resides in the microsome membrane. The protein localises to the cytoplasm. It carries out the reaction an organic molecule + reduced [NADPH--hemoprotein reductase] + O2 = an alcohol + oxidized [NADPH--hemoprotein reductase] + H2O + H(+). The catalysed reaction is estrone + reduced [NADPH--hemoprotein reductase] + O2 = 2-hydroxyestrone + oxidized [NADPH--hemoprotein reductase] + H2O + H(+). It catalyses the reaction estrone + reduced [NADPH--hemoprotein reductase] + O2 = 4-hydroxyestrone + oxidized [NADPH--hemoprotein reductase] + H2O + H(+). The enzyme catalyses estrone + reduced [NADPH--hemoprotein reductase] + O2 = 6alpha-hydroxyestrone + oxidized [NADPH--hemoprotein reductase] + H2O + H(+). It carries out the reaction estrone + reduced [NADPH--hemoprotein reductase] + O2 = 15alpha-hydroxyestrone + oxidized [NADPH--hemoprotein reductase] + H2O + H(+). The catalysed reaction is estrone + reduced [NADPH--hemoprotein reductase] + O2 = 16alpha-hydroxyestrone + oxidized [NADPH--hemoprotein reductase] + H2O + H(+). It catalyses the reaction 17beta-estradiol + reduced [NADPH--hemoprotein reductase] + O2 = 2-hydroxy-17beta-estradiol + oxidized [NADPH--hemoprotein reductase] + H2O + H(+). The enzyme catalyses 17beta-estradiol + reduced [NADPH--hemoprotein reductase] + O2 = 4-hydroxy-17beta-estradiol + oxidized [NADPH--hemoprotein reductase] + H2O + H(+). It carries out the reaction 17beta-estradiol + reduced [NADPH--hemoprotein reductase] + O2 = 6alpha-hydroxy-17beta-estradiol + oxidized [NADPH--hemoprotein reductase] + H2O + H(+). The catalysed reaction is 17beta-estradiol + reduced [NADPH--hemoprotein reductase] + O2 = 7alpha-hydroxy-17beta-estradiol + oxidized [NADPH--hemoprotein reductase] + H2O + H(+). It catalyses the reaction 17beta-estradiol + reduced [NADPH--hemoprotein reductase] + O2 = 15alpha-hydroxy-17beta-estradiol + oxidized [NADPH--hemoprotein reductase] + H2O + H(+). The enzyme catalyses (5Z,8Z,11Z)-eicosatrienoate + reduced [NADPH--hemoprotein reductase] + O2 = 19-hydroxy-(5Z,8Z,11Z)-eicosatrienoate + oxidized [NADPH--hemoprotein reductase] + H2O + H(+). It carries out the reaction (5Z,8Z,11Z,14Z)-eicosatetraenoate + reduced [NADPH--hemoprotein reductase] + O2 = 16-hydroxy-(5Z,8Z,11Z,14Z)-eicosatetraenoate + oxidized [NADPH--hemoprotein reductase] + H2O + H(+). The catalysed reaction is (5Z,8Z,11Z,14Z)-eicosatetraenoate + reduced [NADPH--hemoprotein reductase] + O2 = 17-hydroxy-(5Z,8Z,11Z,14Z)-eicosatetraenoate + oxidized [NADPH--hemoprotein reductase] + H2O + H(+). It catalyses the reaction (5Z,8Z,11Z,14Z)-eicosatetraenoate + reduced [NADPH--hemoprotein reductase] + O2 = 18-hydroxy-(5Z,8Z,11Z,14Z)-eicosatetraenoate + oxidized [NADPH--hemoprotein reductase] + H2O + H(+). The enzyme catalyses (5Z,8Z,11Z,14Z)-eicosatetraenoate + reduced [NADPH--hemoprotein reductase] + O2 = 19-hydroxy-(5Z,8Z,11Z,14Z)-eicosatetraenoate + oxidized [NADPH--hemoprotein reductase] + H2O + H(+). It carries out the reaction (5Z,8Z,11Z,14Z,17Z)-eicosapentaenoate + reduced [NADPH--hemoprotein reductase] + O2 = 19-hydroxy-(5Z,8Z,11Z,14Z,17Z)-eicosapentaenoate + oxidized [NADPH--hemoprotein reductase] + H2O + H(+). The catalysed reaction is (5Z,8Z,11Z,14Z)-eicosatetraenoate + reduced [NADPH--hemoprotein reductase] + O2 = (8R,9S)-epoxy-(5Z,11Z,14Z)-eicosatrienoate + oxidized [NADPH--hemoprotein reductase] + H2O + H(+). It catalyses the reaction (5Z,8Z,11Z,14Z)-eicosatetraenoate + reduced [NADPH--hemoprotein reductase] + O2 = (11R,12S)-epoxy-(5Z,8Z,14Z)-eicosatrienoate + oxidized [NADPH--hemoprotein reductase] + H2O + H(+). The enzyme catalyses (5Z,8Z,11Z,14Z)-eicosatetraenoate + reduced [NADPH--hemoprotein reductase] + O2 = (14S,15R)-epoxy-(5Z,8Z,11Z)-eicosatrienoate + oxidized [NADPH--hemoprotein reductase] + H2O + H(+). It carries out the reaction (5Z,8Z,11Z,14Z)-eicosatetraenoate + reduced [NADPH--hemoprotein reductase] + O2 = (14R,15S)-epoxy-(5Z,8Z,11Z)-eicosatrienoate + oxidized [NADPH--hemoprotein reductase] + H2O + H(+). The catalysed reaction is (5Z,8Z,11Z,14Z,17Z)-eicosapentaenoate + reduced [NADPH--hemoprotein reductase] + O2 = (17R,18S)-epoxy-(5Z,8Z,11Z,14Z)-eicosatetraenoate + oxidized [NADPH--hemoprotein reductase] + H2O + H(+). It catalyses the reaction (4Z,7Z,10Z,13Z,16Z,19Z)-docosahexaenoate + reduced [NADPH--hemoprotein reductase] + O2 = (19S,20R)-epoxy-(4Z,7Z,10Z,13Z,16Z)-docosapentaenoate + oxidized [NADPH--hemoprotein reductase] + H2O + H(+). The enzyme catalyses (4Z,7Z,10Z,13Z,16Z,19Z)-docosahexaenoate + reduced [NADPH--hemoprotein reductase] + O2 = (19R,20S)-epoxy-(4Z,7Z,10Z,13Z,16Z)-docosapentaenoate + oxidized [NADPH--hemoprotein reductase] + H2O + H(+). It carries out the reaction all-trans-retinol + reduced [NADPH--hemoprotein reductase] + O2 = all-trans-retinal + oxidized [NADPH--hemoprotein reductase] + 2 H2O + H(+). The catalysed reaction is all-trans-retinal + reduced [NADPH--hemoprotein reductase] + O2 = all-trans-retinoate + oxidized [NADPH--hemoprotein reductase] + H2O + 2 H(+). It catalyses the reaction (13S)-hydroperoxy-(9Z,11E)-octadecadienoate = 13-oxo-(9Z,11E)-octadecadienoate + H2O. The enzyme catalyses (12S)-hydroperoxy-(5Z,8Z,10E,14Z)-eicosatetraenoate = 12-oxo-(5Z,8Z,10E,14Z)-eicosatetraenoate + H2O. It carries out the reaction (15S)-hydroperoxy-(5Z,8Z,11Z,13E)-eicosatetraenoate = 15-oxo-(5Z,8Z,11Z,13E)-eicosatetraenoate + H2O. The catalysed reaction is (5S)-hydroperoxy-(6E,8Z,11Z,14Z)-eicosatetraenoate = 5-oxo-(6E,8Z,11Z,14Z)-eicosatetraenoate + H2O. It participates in steroid hormone biosynthesis. The protein operates within lipid metabolism; fatty acid metabolism. Its pathway is cofactor metabolism; retinol metabolism. A cytochrome P450 monooxygenase involved in the metabolism of various endogenous substrates, including fatty acids, steroid hormones and vitamins. Mechanistically, uses molecular oxygen inserting one oxygen atom into a substrate, and reducing the second into a water molecule, with two electrons provided by NADPH via cytochrome P450 reductase (CPR; NADPH-ferrihemoprotein reductase). Catalyzes the hydroxylation of carbon-hydrogen bonds. Exhibits high catalytic activity for the formation of hydroxyestrogens from estrone (E1) and 17beta-estradiol (E2), namely 2-hydroxy E1 and E2, as well as D-ring hydroxylated E1 and E2 at the C15alpha and C16alpha positions. Displays different regioselectivities for polyunsaturated fatty acids (PUFA) hydroxylation. Catalyzes the epoxidation of double bonds of certain PUFA. Converts arachidonic acid toward epoxyeicosatrienoic acid (EET) regioisomers, 8,9-, 11,12-, and 14,15-EET, that function as lipid mediators in the vascular system. Displays an absolute stereoselectivity in the epoxidation of eicosapentaenoic acid (EPA) producing the 17(R),18(S) enantiomer. May play an important role in all-trans retinoic acid biosynthesis in extrahepatic tissues. Catalyzes two successive oxidative transformation of all-trans retinol to all-trans retinal and then to the active form all-trans retinoic acid. May also participate in eicosanoids metabolism by converting hydroperoxide species into oxo metabolites (lipoxygenase-like reaction, NADPH-independent). This Macaca mulatta (Rhesus macaque) protein is Cytochrome P450 1A1 (CYP1A1).